The chain runs to 439 residues: UDP-N-acetylglucosamine--N-acetylmuramyl-(pentapeptide) pyrophosphoryl-undecaprenol N-acetylglucosamine transferase (439 aa).

UDP-N-acetyl-alpha-D-glucosamine contacts are provided by residues 25–27, R218, S248, and Q362; that span reads TGG.

It belongs to the glycosyltransferase 28 family. MurG subfamily.

The protein resides in the cell membrane. It carries out the reaction di-trans,octa-cis-undecaprenyl diphospho-N-acetyl-alpha-D-muramoyl-L-alanyl-D-glutamyl-meso-2,6-diaminopimeloyl-D-alanyl-D-alanine + UDP-N-acetyl-alpha-D-glucosamine = di-trans,octa-cis-undecaprenyl diphospho-[N-acetyl-alpha-D-glucosaminyl-(1-&gt;4)]-N-acetyl-alpha-D-muramoyl-L-alanyl-D-glutamyl-meso-2,6-diaminopimeloyl-D-alanyl-D-alanine + UDP + H(+). It functions in the pathway cell wall biogenesis; peptidoglycan biosynthesis. Functionally, cell wall formation. Catalyzes the transfer of a GlcNAc subunit on undecaprenyl-pyrophosphoryl-MurNAc-pentapeptide (lipid intermediate I) to form undecaprenyl-pyrophosphoryl-MurNAc-(pentapeptide)GlcNAc (lipid intermediate II). This Roseiflexus sp. (strain RS-1) protein is UDP-N-acetylglucosamine--N-acetylmuramyl-(pentapeptide) pyrophosphoryl-undecaprenol N-acetylglucosamine transferase.